A 159-amino-acid polypeptide reads, in one-letter code: NADH-quinone oxidoreductase subunit B (159 aa).

Residues Cys37, Cys38, Cys102, and Cys132 each coordinate [4Fe-4S] cluster.

Belongs to the complex I 20 kDa subunit family. In terms of assembly, NDH-1 is composed of 14 different subunits. Subunits NuoB, C, D, E, F, and G constitute the peripheral sector of the complex. [4Fe-4S] cluster is required as a cofactor.

Its subcellular location is the cell inner membrane. It carries out the reaction a quinone + NADH + 5 H(+)(in) = a quinol + NAD(+) + 4 H(+)(out). In terms of biological role, NDH-1 shuttles electrons from NADH, via FMN and iron-sulfur (Fe-S) centers, to quinones in the respiratory chain. Couples the redox reaction to proton translocation (for every two electrons transferred, four hydrogen ions are translocated across the cytoplasmic membrane), and thus conserves the redox energy in a proton gradient. This chain is NADH-quinone oxidoreductase subunit B, found in Polaromonas naphthalenivorans (strain CJ2).